The chain runs to 328 residues: Malate dehydrogenase (328 aa).

12-18 is an NAD(+) binding site; the sequence is GAAGQIG. Substrate contacts are provided by arginine 93 and arginine 99. NAD(+) contacts are provided by residues asparagine 106, glutamine 113, and 130 to 132; that span reads VGN. Residues asparagine 132 and arginine 166 each contribute to the substrate site. Catalysis depends on histidine 191, which acts as the Proton acceptor.

This sequence belongs to the LDH/MDH superfamily. MDH type 2 family.

The enzyme catalyses (S)-malate + NAD(+) = oxaloacetate + NADH + H(+). Catalyzes the reversible oxidation of malate to oxaloacetate. This Dechloromonas aromatica (strain RCB) protein is Malate dehydrogenase.